A 489-amino-acid chain; its full sequence is Glycogen synthase (489 aa).

ADP-alpha-D-glucose is bound at residue Arg-20.

This sequence belongs to the glycosyltransferase 1 family. Bacterial/plant glycogen synthase subfamily.

It catalyses the reaction [(1-&gt;4)-alpha-D-glucosyl](n) + ADP-alpha-D-glucose = [(1-&gt;4)-alpha-D-glucosyl](n+1) + ADP + H(+). It functions in the pathway glycan biosynthesis; glycogen biosynthesis. In terms of biological role, synthesizes alpha-1,4-glucan chains using ADP-glucose. This is Glycogen synthase from Chlorobium limicola (strain DSM 245 / NBRC 103803 / 6330).